Here is a 466-residue protein sequence, read N- to C-terminus: MAEEQDLSEVELSPVGSEEPRCLSPGSAPSLGPDGGGGGSGLRASPGPGELGKVKKEQQDGEADDDKFPVCIREAVSQVLSGYDWTLVPMPVRVNGASKSKPHVKRPMNAFMVWAQAARRKLADQYPHLHNAELSKTLGKLWRLLNESDKRPFIEEAERLRMQHKKDHPDYKYQPRRRKNGKAAQGEAECPGGEAEQGGTAAIQAHYKSAHLDHRHPGEGSPMSDGNPEHPSGQSHGPPTPPTTPKTELQSGKADPKRDGRSMGEGGKPHIDFGNVDIGEISHEVMSNMETFDVAELDQYLPPNGHPGHVSSYSAAGYGLGSALAVASGHSAWISKPPGVALPTVSPPGVDAKAQVKTETAGPQGPPHYTDQPSTSQIAYTSLSLPHYGSAFPSISRPQFDYSDHQPSGPYYGHSGQASGLYSAFSYMGPSQRPLYTAISDPSPSGPQSHSPTHWEQPVYTTLSRP.

The tract at residues 1–67 (MAEEQDLSEV…QQDGEADDDK (67 aa)) is disordered. Over residues 23–32 (LSPGSAPSLG) the composition is skewed to low complexity. Ser-24 carries the phosphoserine modification. The dimerization (DIM) stretch occupies residues 62-102 (EADDDKFPVCIREAVSQVLSGYDWTLVPMPVRVNGASKSKP). A DNA-binding region (HMG box) is located at residues 104–172 (VKRPMNAFMV…QHKKDHPDYK (69 aa)). Residues 134–145 (LSKTLGKLWRLL) carry the Nuclear export signal motif. Composition is skewed to basic and acidic residues over residues 160 to 173 (LRMQ…DYKY) and 254 to 271 (ADPK…KPHI). Disordered stretches follow at residues 160 to 199 (LRMQ…EQGG), 212 to 274 (LDHR…IDFG), 354 to 375 (AQVK…QPST), and 433 to 466 (RPLY…LSRP). Residues 228–310 (PEHPSGQSHG…LPPNGHPGHV (83 aa)) form a transactivation domain (TAM) region. Residues 353–466 (KAQVKTETAG…QPVYTTLSRP (114 aa)) form a transactivation domain (TAC) region. A compositionally biased stretch (polar residues) spans 440-466 (SDPSPSGPQSHSPTHWEQPVYTTLSRP).

As to quaternary structure, monomer. Interacts with ARMCX3 at the mitochondrial outer membrane surface. Interacts with PAX3. In terms of tissue distribution, expressed in fetal brain and in adult brain, heart, small intestine and colon.

Its subcellular location is the cytoplasm. The protein resides in the nucleus. It localises to the mitochondrion outer membrane. In terms of biological role, transcription factor that plays a central role in developing and mature glia. Specifically activates expression of myelin genes, during oligodendrocyte (OL) maturation, such as DUSP15 and MYRF, thereby playing a central role in oligodendrocyte maturation and CNS myelination. Once induced, MYRF cooperates with SOX10 to implement the myelination program. Transcriptional activator of MITF, acting synergistically with PAX3. Transcriptional activator of MBP, via binding to the gene promoter. The polypeptide is Transcription factor SOX-10 (SOX10) (Homo sapiens (Human)).